An 83-amino-acid chain; its full sequence is ATP synthase subunit c (83 aa).

Helical transmembrane passes span isoleucine 10 to leucine 30 and methionine 52 to phenylalanine 72.

Belongs to the ATPase C chain family. F-type ATPases have 2 components, F(1) - the catalytic core - and F(0) - the membrane proton channel. F(1) has five subunits: alpha(3), beta(3), gamma(1), delta(1), epsilon(1). F(0) has three main subunits: a(1), b(2) and c(10-14). The alpha and beta chains form an alternating ring which encloses part of the gamma chain. F(1) is attached to F(0) by a central stalk formed by the gamma and epsilon chains, while a peripheral stalk is formed by the delta and b chains.

Its subcellular location is the cell inner membrane. In terms of biological role, f(1)F(0) ATP synthase produces ATP from ADP in the presence of a proton or sodium gradient. F-type ATPases consist of two structural domains, F(1) containing the extramembraneous catalytic core and F(0) containing the membrane proton channel, linked together by a central stalk and a peripheral stalk. During catalysis, ATP synthesis in the catalytic domain of F(1) is coupled via a rotary mechanism of the central stalk subunits to proton translocation. Key component of the F(0) channel; it plays a direct role in translocation across the membrane. A homomeric c-ring of between 10-14 subunits forms the central stalk rotor element with the F(1) delta and epsilon subunits. The sequence is that of ATP synthase subunit c from Shewanella baltica (strain OS223).